The chain runs to 247 residues: Uridylate kinase (247 aa).

15–18 provides a ligand contact to ATP; it reads KLSG. Positions 23–28 are involved in allosteric activation by GTP; sequence GDEGFG. Glycine 57 is a binding site for UMP. Glycine 58 and arginine 62 together coordinate ATP. UMP contacts are provided by residues aspartate 77 and 138 to 145; that span reads TGNPFFTT. ATP contacts are provided by threonine 165, tyrosine 171, and aspartate 174.

The protein belongs to the UMP kinase family. In terms of assembly, homohexamer.

The protein localises to the cytoplasm. It catalyses the reaction UMP + ATP = UDP + ADP. Its pathway is pyrimidine metabolism; CTP biosynthesis via de novo pathway; UDP from UMP (UMPK route): step 1/1. Allosterically activated by GTP. Inhibited by UTP. Functionally, catalyzes the reversible phosphorylation of UMP to UDP. The chain is Uridylate kinase from Saccharophagus degradans (strain 2-40 / ATCC 43961 / DSM 17024).